An 848-amino-acid polypeptide reads, in one-letter code: Beta-galactosidase 13 (848 aa).

The signal sequence occupies residues 1 to 27; sequence MKIHSSDHSWLLLAVLVILLSFSGALS. The N-linked (GlcNAc...) asparagine glycan is linked to Asn107. Residue Glu200 is the Proton donor of the active site. The Nucleophile role is filled by Glu271. N-linked (GlcNAc...) asparagine glycans are attached at residues Asn272, Asn303, Asn376, Asn398, Asn782, Asn787, and Asn817. One can recognise an SUEL-type lectin domain in the interval 754–843; it reads DDVHLTANLK…KKLAVQVKCG (90 aa).

Belongs to the glycosyl hydrolase 35 family. In terms of tissue distribution, ubiquitous, with higher expression levels in roots, flowers and siliques.

It localises to the secreted. The protein resides in the extracellular space. The protein localises to the apoplast. The catalysed reaction is Hydrolysis of terminal non-reducing beta-D-galactose residues in beta-D-galactosides.. This is Beta-galactosidase 13 (BGAL13) from Arabidopsis thaliana (Mouse-ear cress).